Reading from the N-terminus, the 226-residue chain is UPF0319 protein YPO1442/y2728/YP_1333 (226 aa).

Residues M1–A20 form the signal peptide.

It belongs to the UPF0319 family.

This Yersinia pestis protein is UPF0319 protein YPO1442/y2728/YP_1333.